We begin with the raw amino-acid sequence, 457 residues long: Interferon regulatory factor 7 (457 aa).

A DNA-binding region (IRF tryptophan pentad repeat) is located at residues 9 to 126 (RVLFGDWLLG…DPHKVYELSR (118 aa)). Lysine 92 is subject to N6-acetyllysine; by KAT2A and KAT2B. Residues 238-410 (RSLGFLDVTI…TLILVKLEPW (173 aa)) form a necessary for the interaction with NMI region. A Glycyl lysine isopeptide (Lys-Gly) (interchain with G-Cter in ubiquitin) cross-link involves residue lysine 329. Glycyl lysine isopeptide (Lys-Gly) (interchain with G-Cter in SUMO) cross-links involve residues lysine 398 and lysine 400. Phosphoserine occurs at positions 425, 426, and 429. At serine 431 the chain carries Phosphoserine; by TBK1 and IKKE. Serine 437, serine 438, and serine 441 each carry phosphoserine.

Belongs to the IRF family. In terms of assembly, monomer. Homodimer; phosphorylation-induced. Heterodimer with IRF3. Interacts with TICAM1 and TICAM2. Interacts with MYD88 and TRAF6. Interacts with NMI; the interaction is direct and leads to the inhibition of IRF7-mediated type I IFN production. Interacts with GBP4; preventing interaction between TRAF6 and IRF7, resulting in impaired TRAF6-mediated IRF7 ubiquitination. Interacts with TARBP2; this interaction prevents IRF7 phosphorylation and activation. Acetylation inhibits its DNA-binding ability and activity. Post-translationally, in response to a viral infection, phosphorylated by TBK1 and IKBKE1. Phosphorylation, and subsequent activation is inhibited by vaccinia virus protein E3. In TLR7- and TLR9-mediated signaling pathway, phosphorylated by IRAK1. In terms of processing, TRAF6-mediated ubiquitination is required for IRF7 activation. TRIM35 mediates IRF7 'Lys-48'-linked polyubiquitination and subsequent proteasomal degradation. 'Lys-48'-linked polyubiquitination and subsequent proteasomal degradation is NMI-dependent in response to Sendai virus infection. Ubiquitinated by UBE3C, leading to its degradation. Sumoylated by TRIM28, which inhibits its transactivation activity. Post-translationally, 'Lys-63'-linked ubiquitination by NEURL3 promotes IRF7 activation.

It localises to the nucleus. The protein resides in the cytoplasm. In the absence of viral infection, maintained as a monomer in an autoinhibited state and phosphorylation disrupts this autoinhibition leading to the liberation of the DNA-binding and dimerization activities and its nuclear localization where it can activate type I IFN and ISG genes. Functionally, key transcriptional regulator of type I interferon (IFN)-dependent immune responses and plays a critical role in the innate immune response against DNA and RNA viruses. Regulates the transcription of type I IFN genes (IFN-alpha and IFN-beta) and IFN-stimulated genes (ISG) by binding to an interferon-stimulated response element (ISRE) in their promoters. Can efficiently activate both the IFN-beta (IFNB) and the IFN-alpha (IFNA) genes and mediate their induction via both the virus-activated, MyD88-independent pathway and the TLR-activated, MyD88-dependent pathway. Induces transcription of ubiquitin hydrolase USP25 mRNA in response to lipopolysaccharide (LPS) or viral infection in a type I IFN-dependent manner. Required during both the early and late phases of the IFN gene induction but is more critical for the late than for the early phase. Exists in an inactive form in the cytoplasm of uninfected cells and following viral infection, double-stranded RNA (dsRNA), or toll-like receptor (TLR) signaling, becomes phosphorylated by IKBKE and TBK1 kinases. This induces a conformational change, leading to its dimerization and nuclear localization where along with other coactivators it can activate transcription of the type I IFN and ISG genes. Can also play a role in regulating adaptive immune responses by inducing PSMB9/LMP2 expression, either directly or through induction of IRF1. Binds to the Q promoter (Qp) of EBV nuclear antigen 1 a (EBNA1) and may play a role in the regulation of EBV latency. Can activate distinct gene expression programs in macrophages and regulate the anti-tumor properties of primary macrophages. The chain is Interferon regulatory factor 7 (Irf7) from Mus musculus (Mouse).